Consider the following 230-residue polypeptide: Small ribosomal subunit protein uS7m (230 aa).

This sequence belongs to the universal ribosomal protein uS7 family. Part of the small ribosomal subunit.

It localises to the mitochondrion. In terms of biological role, one of the primary rRNA binding proteins, it binds directly to 18S rRNA where it nucleates assembly of the head domain of the small subunit. The sequence is that of Small ribosomal subunit protein uS7m (RPS7) from Marchantia polymorpha (Common liverwort).